The chain runs to 427 residues: Trigger factor (427 aa).

In terms of domain architecture, PPIase FKBP-type spans 163–248; the sequence is GDTVVIDFVG…IHEVKAKEVP (86 aa).

The protein belongs to the FKBP-type PPIase family. Tig subfamily.

The protein localises to the cytoplasm. It carries out the reaction [protein]-peptidylproline (omega=180) = [protein]-peptidylproline (omega=0). Its function is as follows. Involved in protein export. Acts as a chaperone by maintaining the newly synthesized protein in an open conformation. Functions as a peptidyl-prolyl cis-trans isomerase. The polypeptide is Trigger factor (Streptococcus mutans serotype c (strain ATCC 700610 / UA159)).